The sequence spans 243 residues: Tryptophan synthase alpha chain (243 aa).

Residues Glu32 and Asp43 each act as proton acceptor in the active site.

This sequence belongs to the TrpA family. In terms of assembly, tetramer of two alpha and two beta chains.

Its subcellular location is the plastid. It localises to the chloroplast. It catalyses the reaction (1S,2R)-1-C-(indol-3-yl)glycerol 3-phosphate + L-serine = D-glyceraldehyde 3-phosphate + L-tryptophan + H2O. It functions in the pathway amino-acid biosynthesis; L-tryptophan biosynthesis; L-tryptophan from chorismate: step 5/5. The alpha subunit is responsible for the aldol cleavage of indoleglycerol phosphate to indole and glyceraldehyde 3-phosphate. In Cyanidioschyzon merolae (strain NIES-3377 / 10D) (Unicellular red alga), this protein is Tryptophan synthase alpha chain.